The chain runs to 85 residues: Conotoxin Lt28.3 (85 aa).

An N-terminal signal peptide occupies residues 1–21 (MPKLEMMLLVLLILPLCYIDA). Residues 22–40 (VGPLPPWNMEDEIIEHWQK) constitute a propeptide that is removed on maturation.

Belongs to the conotoxin D superfamily. Contains 5 disulfide bonds. Expressed by the venom duct.

The protein localises to the secreted. Functionally, probable neurotoxin. The chain is Conotoxin Lt28.3 from Conus litteratus (Lettered cone).